Consider the following 148-residue polypeptide: tRNA-specific adenosine deaminase (148 aa).

The CMP/dCMP-type deaminase domain maps to 1–116 (MEQALKQARL…SNLRYFNSSA (116 aa)). A Zn(2+)-binding site is contributed by histidine 48. Glutamate 50 acts as the Proton donor in catalysis. Residues cysteine 78 and cysteine 81 each coordinate Zn(2+).

The protein belongs to the cytidine and deoxycytidylate deaminase family. Homodimer. Requires Zn(2+) as cofactor.

The catalysed reaction is adenosine(34) in tRNA + H2O + H(+) = inosine(34) in tRNA + NH4(+). Functionally, catalyzes the deamination of adenosine to inosine at the wobble position 34 of tRNA(Arg2). This is tRNA-specific adenosine deaminase from Rickettsia typhi (strain ATCC VR-144 / Wilmington).